A 441-amino-acid chain; its full sequence is ATP-dependent protease ATPase subunit HslU (441 aa).

Residues I18, 60 to 65, D254, E319, and R391 each bind ATP; that span reads GVGKTE.

The protein belongs to the ClpX chaperone family. HslU subfamily. As to quaternary structure, a double ring-shaped homohexamer of HslV is capped on each side by a ring-shaped HslU homohexamer. The assembly of the HslU/HslV complex is dependent on binding of ATP.

Its subcellular location is the cytoplasm. In terms of biological role, ATPase subunit of a proteasome-like degradation complex; this subunit has chaperone activity. The binding of ATP and its subsequent hydrolysis by HslU are essential for unfolding of protein substrates subsequently hydrolyzed by HslV. HslU recognizes the N-terminal part of its protein substrates and unfolds these before they are guided to HslV for hydrolysis. This Shewanella sediminis (strain HAW-EB3) protein is ATP-dependent protease ATPase subunit HslU.